The following is a 502-amino-acid chain: Lipoyl synthase, apicoplast (502 aa).

Residues 1-16 (MNFLVLFFSYSIFVLP) form the signal peptide. Positions 192, 197, 203, 218, 222, 225, and 433 each coordinate [4Fe-4S] cluster. Residues 204–422 (WNIGTATIML…KDVGLKMGFK (219 aa)) enclose the Radical SAM core domain.

Belongs to the radical SAM superfamily. Lipoyl synthase family. [4Fe-4S] cluster serves as cofactor.

Its subcellular location is the plastid. The protein localises to the apicoplast. The enzyme catalyses [[Fe-S] cluster scaffold protein carrying a second [4Fe-4S](2+) cluster] + N(6)-octanoyl-L-lysyl-[protein] + 2 oxidized [2Fe-2S]-[ferredoxin] + 2 S-adenosyl-L-methionine + 4 H(+) = [[Fe-S] cluster scaffold protein] + N(6)-[(R)-dihydrolipoyl]-L-lysyl-[protein] + 4 Fe(3+) + 2 hydrogen sulfide + 2 5'-deoxyadenosine + 2 L-methionine + 2 reduced [2Fe-2S]-[ferredoxin]. It functions in the pathway protein modification; protein lipoylation via endogenous pathway; protein N(6)-(lipoyl)lysine from octanoyl-[acyl-carrier-protein]: step 2/2. Its function is as follows. Catalyzes the radical-mediated insertion of two sulfur atoms into the C-6 and C-8 positions of the octanoyl moiety bound to the lipoyl domains of lipoate-dependent enzymes, thereby converting the octanoylated domains into lipoylated derivatives. This chain is Lipoyl synthase, apicoplast, found in Plasmodium yoelii yoelii.